A 206-amino-acid chain; its full sequence is Halorhodopsin (206 aa).

A helical transmembrane segment spans residues 1–15 (IALAGLSILLFVYMG). The Cytoplasmic portion of the chain corresponds to 16–21 (RNVEDP). The helical transmembrane segment at 22–45 (RAQLIFVATLMVPLVSISSYTGLV) threads the bilayer. The Extracellular portion of the chain corresponds to 46–75 (SGLTVGFLEMPAGHALAGMGAGPEGGVFTP). The helical transmembrane segment at 76-97 (WGRYLTWAFSTPMILIALGLLA) threads the bilayer. The Cytoplasmic segment spans residues 98–100 (GSN). Residues 101 to 124 (MSKLFTAVVADVGMCITGLAAALT) form a helical membrane-spanning segment. Residues 125 to 127 (TSS) are Extracellular-facing. The helical transmembrane segment at 128–150 (YLLRWVWYGISCAFFVVVLYILL) threads the bilayer. The Cytoplasmic segment spans residues 151–162 (AEWAKDAEVAGT). A helical transmembrane segment spans residues 163–186 (ADIFNTLKVLTVVLWLGYPIFWAL). Residues 187–195 (GAEGLAVLD) lie on the Extracellular side of the membrane. The chain crosses the membrane as a helical span at residues 196-206 (IAITSWAYSGM).

This sequence belongs to the archaeal/bacterial/fungal opsin family.

Its subcellular location is the cell membrane. Functionally, light-driven chloride pump. The chain is Halorhodopsin (hop) from Halobacterium halobium (strain mex).